The sequence spans 204 residues: Dephospho-CoA kinase (204 aa).

A DPCK domain is found at 5 to 204 (VVGLTGGIGS…YLANLVKAML (200 aa)). An ATP-binding site is contributed by 13–18 (GSGKSA).

Belongs to the CoaE family.

It localises to the cytoplasm. It catalyses the reaction 3'-dephospho-CoA + ATP = ADP + CoA + H(+). The protein operates within cofactor biosynthesis; coenzyme A biosynthesis; CoA from (R)-pantothenate: step 5/5. Its function is as follows. Catalyzes the phosphorylation of the 3'-hydroxyl group of dephosphocoenzyme A to form coenzyme A. The protein is Dephospho-CoA kinase of Chromobacterium violaceum (strain ATCC 12472 / DSM 30191 / JCM 1249 / CCUG 213 / NBRC 12614 / NCIMB 9131 / NCTC 9757 / MK).